A 504-amino-acid polypeptide reads, in one-letter code: Acetyltransferase pyiB (504 aa).

An N-terminal signal peptide occupies residues 1–18 (MGFLSAGGLWASLFRARI). N84 carries an N-linked (GlcNAc...) asparagine glycan. H181 (proton acceptor) is an active-site residue. N413 and N467 each carry an N-linked (GlcNAc...) asparagine glycan.

Belongs to the plant acyltransferase family.

Its pathway is mycotoxin biosynthesis. Its function is as follows. Acetyltransferase; part of the gene cluster that mediates the biosynthesis of the mycotoxin pyrichalasin H, a tyrosine-derived cytochalasan that inhibits the growth of rice seedlings, but also inhibits lymphocyte capping and actin polymerization and alters cell morphology. Pyrichalasin H is indicated as the responsible agent for the genus-specific pathogenicity of M.grisea toward crabgrass. The first step in the pathway is catalyzed by the O-methyltransferase pyiA which methylates free tyrosine to generate the precursor O-methyltyrosine. The hybrid PKS-NRPS pyiS, assisted by the enoyl reductase pyiC, are responsible for fusion of the O-methyltyrosine precursor and the polyketide backbone. The polyketide synthase module (PKS) of pyiS is responsible for the synthesis of the polyketide backbone and the downstream nonribosomal peptide synthetase (NRPS) amidates the carboxyl end of the polyketide with the O-methyltyrosine precursor. As the NRPS A-domain demonstrates substrate tolerance, pyiS can also use phenylalanine, tyrosine and even para-chlorophenylalanine as amino acid precursor, which leads to the production of novel cytochalasans, including halogenated cytochalasans. Because pyiS lacks a designated enoylreductase (ER) domain, the required activity is provided the enoyl reductase pyiC. Reduction by the hydrolyase pyiE leads to 1,5-dihydropyrrolone, which is substrate for dehydration and intra-molecular Diels-Alder cyclization by the Diels-Alderase pyiF to yield the required isoindolone-fused macrocycle. The tailoring cytochrome P450 monooxygenases piyD and piyG catalyze the hydroxylation at C-18 and C-7, respectivily, whereas the short-chain dehydrogenase/reductase pyiH reduces the carbonyl at C-21 in preparation for the transfer of an acetyl group by the acetyltransferase pyiB. These 3 reactions whose order is not clear yet, lead to the production of O-methylpyrichalasin J, a deacetylated pyrichalasin H. Finally, pyiB to converts O-methylpyrichalasin J into the final product pyrichalasin H via acetylation of C-21. This Pyricularia grisea (Crabgrass-specific blast fungus) protein is Acetyltransferase pyiB.